The following is a 215-amino-acid chain: 3-dehydroquinate dehydratase (215 aa).

3-dehydroquinate is bound by residues Ser-6, 31–33 (ELR), and Arg-64. Residue His-111 is the Proton donor/acceptor of the active site. The active-site Schiff-base intermediate with substrate is the Lys-138. Residues Arg-174, Thr-193, and Gln-197 each contribute to the 3-dehydroquinate site.

This sequence belongs to the type-I 3-dehydroquinase family. Homodimer.

The enzyme catalyses 3-dehydroquinate = 3-dehydroshikimate + H2O. The protein operates within metabolic intermediate biosynthesis; chorismate biosynthesis; chorismate from D-erythrose 4-phosphate and phosphoenolpyruvate: step 3/7. Functionally, involved in the third step of the chorismate pathway, which leads to the biosynthesis of aromatic amino acids. Catalyzes the cis-dehydration of 3-dehydroquinate (DHQ) and introduces the first double bond of the aromatic ring to yield 3-dehydroshikimate. The polypeptide is 3-dehydroquinate dehydratase (Ignicoccus hospitalis (strain KIN4/I / DSM 18386 / JCM 14125)).